Consider the following 1047-residue polypeptide: Protein masquerade (1047 aa).

An N-terminal signal peptide occupies residues 1 to 30 (MPRHSSTMSRLVLPLIFSILLVSKPSPSQA). Residues 54–87 (KDCPGVCVHTLATLICYEVLDDVACPSPSMKCCI) are CLIP 1. 3 disulfide bridges follow: C56-C85, C60-C78, and C69-C86. N95 carries an N-linked (GlcNAc...) asparagine glycan. Composition is skewed to low complexity over residues 98–139 (AVRA…STTP) and 148–175 (KRPATSSTTKATVATTKKPSTTKKVATA). The tract at residues 98–189 (AVRATTTPKT…KEEATKADDA (92 aa)) is disordered. Basic and acidic residues predominate over residues 176 to 189 (KPKDKEEATKADDA). Positions 192 to 224 (DCTGVCVADRIAEYCEAYLTSDGLCKEGTKCCV) are CLIP 2. 3 cysteine pairs are disulfide-bonded: C193–C222, C197–C216, and C206–C223. A glycan (N-linked (GlcNAc...) asparagine) is linked at N251. The interval 252–335 (QTLSEKSAPA…PLSNKLKSGQ (84 aa)) is disordered. Over residues 263 to 280 (SSSTSTTSTTTTTSTTTT) the composition is skewed to low complexity. N287 carries N-linked (GlcNAc...) asparagine glycosylation. A compositionally biased stretch (acidic residues) spans 307–325 (AAEEEEEQETEEDGEEEEP). The segment at 343–374 (ECEGECMNGIFAIFCDDIDSDAFCPGEESCCV) is CLIP 3. Disulfide bonds link C344–C372, C348–C366, and C357–C373. A disordered region spans residues 376–428 (GGASEATPSSKAPPTKPAIKHAPKPAAKPARPASPPPAPPSSTSGGGGGGDFL). The CLIP 4 stretch occupies residues 457–492 (RCPGFCLLNIMAAFCERPSVLVSTPTTCAKGSVCCD). Cystine bridges form between C458–C490, C462–C484, and C471–C491. The segment at 498–527 (APKPKLPPPTPSPTASPTAPPYVLPNTPSP) is disordered. Positions 501-527 (PKLPPPTPSPTASPTAPPYVLPNTPSP) are enriched in pro residues. The CLIP 5 stretch occupies residues 532–567 (ECPGSCIVSLLSFTCFKNAEMTDLFRCKRSGQICCA). 3 disulfides stabilise this stretch: C533/C565, C537/C558, and C546/C566. N-linked (GlcNAc...) asparagine glycosylation occurs at N582. The segment at 583–673 (DTAYYPAPPP…TTTTTTTTPR (91 aa)) is disordered. Composition is skewed to pro residues over residues 588 to 606 (PAPPPPPIGPPQAYPPQTP), 613 to 638 (NPPPQGPPPQMAPHHPNPYQPPPPAP), and 650 to 661 (GLPPQPQPPMTT). Positions 662-672 (PPTTTTTTTTP) are enriched in low complexity. 5 disulfide bridges follow: C682/C916, C829/C845, C930/C1001, C961/C981, and C991/C1019. N-linked (GlcNAc...) asparagine glycans are attached at residues N726 and N794. The tract at residues 803–1043 (VVGGEDGENG…FIGWINQIIS (241 aa)) is peptidase S1.

This sequence belongs to the peptidase S1 family. CLIP subfamily. Proteolytically cleaved and thereafter secreted.

The protein localises to the secreted. Its subcellular location is the cell projection. It is found in the axon. In terms of biological role, in embryogenesis, has a role in somatic muscle attachment and in the development of axonal pathways probably by stabilizing cell-matrix adhesion and/or by acting as a competitive antagonist of serine proteases. The sequence is that of Protein masquerade from Drosophila melanogaster (Fruit fly).